The primary structure comprises 369 residues: UPF0284 protein cce_1085 (369 aa).

Belongs to the UPF0284 family.

In Crocosphaera subtropica (strain ATCC 51142 / BH68) (Cyanothece sp. (strain ATCC 51142)), this protein is UPF0284 protein cce_1085.